The chain runs to 314 residues: Olfactory receptor 14K1 (314 aa).

Topologically, residues 1–23 (MTNQTQMMEFLLVRFTENWVLLR) are extracellular. N-linked (GlcNAc...) asparagine glycosylation occurs at N3. A helical transmembrane segment spans residues 24 to 44 (LHALLFSLIYLTAVLMNLVII). The Cytoplasmic segment spans residues 45 to 52 (LLMILDHR). The chain crosses the membrane as a helical span at residues 53-73 (LHMAMYFFLRHLSFLDLCLIS). At 74–97 (ATVPKSILNSVASTDSISFLGCVL) the chain is on the extracellular side. C95 and C187 form a disulfide bridge. A helical transmembrane segment spans residues 98–118 (QLFLVVLLAGSEIGILTAMSY). Over 119-131 (DRYAAICCPLHCE) the chain is Cytoplasmic. A helical membrane pass occupies residues 132–152 (AVMSRGLCVQLMALSWLNRGA). Residues 153 to 194 (LGLLYTAGTFSLNFYGSDELHQFFCDVPALLKLTCSKEHAII) lie on the Extracellular side of the membrane. The chain crosses the membrane as a helical span at residues 195-215 (SVSVAIGVCYAFSCLVCIVVS). The Cytoplasmic portion of the chain corresponds to 216-235 (YVYIFSAVLRISQRQRQSKA). Residues 236–256 (FSNCVPHLIVVTVFLVTGAVA) form a helical membrane-spanning segment. The Extracellular segment spans residues 257-269 (YLKPGSDAPSILD). Residues 270 to 290 (LLVSVFYSVAPPTLNPVIYCL) traverse the membrane as a helical segment. The Cytoplasmic segment spans residues 291–314 (KNKDIKSALSKVLWNVRSSGVMKR).

Belongs to the G-protein coupled receptor 1 family.

It localises to the cell membrane. Its function is as follows. Odorant receptor. In Homo sapiens (Human), this protein is Olfactory receptor 14K1 (OR14K1).